Consider the following 119-residue polypeptide: Aspartate 1-decarboxylase (119 aa).

Ser25 (schiff-base intermediate with substrate; via pyruvic acid) is an active-site residue. The residue at position 25 (Ser25) is a Pyruvic acid (Ser). Residue Thr57 coordinates substrate. Residue Tyr58 is the Proton donor of the active site. Substrate is bound at residue 73-75 (GAA).

This sequence belongs to the PanD family. As to quaternary structure, heterooctamer of four alpha and four beta subunits. Requires pyruvate as cofactor. Is synthesized initially as an inactive proenzyme, which is activated by self-cleavage at a specific serine bond to produce a beta-subunit with a hydroxyl group at its C-terminus and an alpha-subunit with a pyruvoyl group at its N-terminus.

The protein resides in the cytoplasm. The catalysed reaction is L-aspartate + H(+) = beta-alanine + CO2. The protein operates within cofactor biosynthesis; (R)-pantothenate biosynthesis; beta-alanine from L-aspartate: step 1/1. Functionally, catalyzes the pyruvoyl-dependent decarboxylation of aspartate to produce beta-alanine. This is Aspartate 1-decarboxylase from Herminiimonas arsenicoxydans.